Here is a 185-residue protein sequence, read N- to C-terminus: Large ribosomal subunit protein uL5 (185 aa).

This sequence belongs to the universal ribosomal protein uL5 family. As to quaternary structure, part of the 50S ribosomal subunit; part of the 5S rRNA/L5/L18/L25 subcomplex. Contacts the 5S rRNA and the P site tRNA. Forms a bridge to the 30S subunit in the 70S ribosome.

Its function is as follows. This is one of the proteins that bind and probably mediate the attachment of the 5S RNA into the large ribosomal subunit, where it forms part of the central protuberance. In the 70S ribosome it contacts protein S13 of the 30S subunit (bridge B1b), connecting the 2 subunits; this bridge is implicated in subunit movement. Contacts the P site tRNA; the 5S rRNA and some of its associated proteins might help stabilize positioning of ribosome-bound tRNAs. The chain is Large ribosomal subunit protein uL5 from Azorhizobium caulinodans (strain ATCC 43989 / DSM 5975 / JCM 20966 / LMG 6465 / NBRC 14845 / NCIMB 13405 / ORS 571).